Reading from the N-terminus, the 387-residue chain is Postreplication repair E3 ubiquitin-protein ligase rad18 (387 aa).

The RING-type zinc-finger motif lies at 29-67 (CLICHEYFRAPLITSCSHTFCSFCIRDYLREHPMCPACR). Residues 119–153 (DSASGDEEWEDDLASNSSPASIAKKTSRDSKKRKR) form a disordered region. Acidic residues predominate over residues 122 to 131 (SGDEEWEDDL). A UBZ4-type zinc finger spans residues 156–183 (LVHCPACSNLVPHNQINQHLDSCLNSPS). Zn(2+)-binding residues include Cys159, Cys162, His174, and Cys178. Residues 174 to 206 (HLDSCLNSPSSPSSSSSPYKNKDNSKSNSLLSF) are disordered. Residues 177-192 (SCLNSPSSPSSSSSPY) show a composition bias toward low complexity. Residues 240–274 (YALLSESKIRSKLSEMGLPTDGHKQLLQRRHAKWV) enclose the SAP domain. The disordered stretch occupies residues 335 to 387 (KQSTTNKNDSLRNTAVESSTEPSTSNGFPATSVSPPLTIDLTNSQTGSDGPQS).

The protein belongs to the RAD18 family. Interacts with E2 ubc2, forming a complex with ubiquitin ligase activity.

The protein localises to the nucleus. The catalysed reaction is S-ubiquitinyl-[E2 ubiquitin-conjugating enzyme]-L-cysteine + [acceptor protein]-L-lysine = [E2 ubiquitin-conjugating enzyme]-L-cysteine + N(6)-ubiquitinyl-[acceptor protein]-L-lysine.. The protein operates within protein modification; protein ubiquitination. In terms of biological role, E3 RING-finger protein, member of the UBC2/RAD6 epistasis group. Associates to the E2 ubiquitin conjugating enzyme ubc2/rad6 to form the ubc2-rad18 ubiquitin ligase complex involved in postreplicative repair (PRR) of damaged DNA. This is Postreplication repair E3 ubiquitin-protein ligase rad18 (rhp18) from Schizosaccharomyces pombe (strain 972 / ATCC 24843) (Fission yeast).